A 558-amino-acid polypeptide reads, in one-letter code: Cytochrome c oxidase subunit 1-beta (558 aa).

Residues Met1–His28 lie on the Cytoplasmic side of the membrane. Residues Lys29–His59 traverse the membrane as a helical segment. At Pro60–Pro82 the chain is on the periplasmic side. The cysteines at positions 66 and 80 are disulfide-linked. The chain crosses the membrane as a helical span at residues Asn83–Ile120. His94 lines the Fe(II)-heme a pocket. Over Gly121 to Ala126 the chain is Cytoplasmic. A helical transmembrane segment spans residues Phe127–Ala151. Over Pro152–Gly176 the chain is Periplasmic. A helical transmembrane segment spans residues Tyr177–Asn206. Residues Met207–Val217 are Cytoplasmic-facing. The helical transmembrane segment at Pro218–Phe251 threads the bilayer. The Periplasmic portion of the chain corresponds to Gly252 to Gly262. A helical transmembrane segment spans residues Asp263–Lys299. 2 residues coordinate Cu cation: His276 and Tyr280. Residues His276–Tyr280 constitute a cross-link (1'-histidyl-3'-tyrosine (His-Tyr)). Residues Lys300–Phe303 are Cytoplasmic-facing. The chain crosses the membrane as a helical span at residues Gly304–Gly331. The Cu cation site is built by His325 and His326. A topological domain (periplasmic) is located at residue Met332. The chain crosses the membrane as a helical span at residues Ser333 to Gly364. The Cytoplasmic segment spans residues Gly365–Phe369. A helical membrane pass occupies residues Lys370 to Gln395. The Periplasmic segment spans residues Ala396–Asp404. Residues Thr405–Gly437 form a helical membrane-spanning segment. His411 contacts heme a3. Fe(II)-heme a is bound at residue His413. The Cytoplasmic portion of the chain corresponds to Arg438–Tyr440. The helical transmembrane segment at Pro441 to Gln469 threads the bilayer. At Gly470–Tyr478 the chain is on the periplasmic side. Residues Pro479–Gly514 form a helical membrane-spanning segment. The Cytoplasmic segment spans residues Lys515–His558.

The protein belongs to the heme-copper respiratory oxidase family. The cofactor is Cu(2+). Requires heme as cofactor. In terms of processing, his-276 and Tyr-280 are involved in the formation of a copper-coordinated covalent cross-link at the active site of the catalytic subunit I.

Its subcellular location is the cell inner membrane. It catalyses the reaction 4 Fe(II)-[cytochrome c] + O2 + 8 H(+)(in) = 4 Fe(III)-[cytochrome c] + 2 H2O + 4 H(+)(out). The protein operates within energy metabolism; oxidative phosphorylation. Its function is as follows. Subunit I and II form the functional core of the enzyme complex. Electrons originating in cytochrome c are transferred via heme a and Cu(A) to the binuclear center formed by heme a3 and Cu(B). This cytochrome c oxidase shows proton pump activity across the membrane in addition to the electron transfer. This Paracoccus denitrificans protein is Cytochrome c oxidase subunit 1-beta (ctaDII).